Here is a 290-residue protein sequence, read N- to C-terminus: MKRTPHLLAIQSHVVFGHAGNSAAVFPMQRVGVNVWPLNTVQFSNHTQYGQWAGEVLAPQQIPELVEGIAAIGELGNCDAVLSGYLGSAAQGRAILSGVARIKAVNPKALYLCDPVMGHPEKGCSVPAEVSDFLLDEAVAMADFLCPNQLELDSFCGRKPQSLFDCLGMARSLLDKGPRAVLVKHLDYPGKLVDGFEMLLVTADGSWHLRRPLLAFPRQPVGVGDLTSGLFLARVLLGDSLVAAFEFTAAAVHEVLLETQACASYELELVRAQDRIAHPRVRFEATPIGF.

Substrate is bound by residues S12 and 47 to 48; that span reads TQ. ATP is bound by residues D114, E151, K184, and 211–214; that span reads RPLL. Position 225 (D225) interacts with substrate.

The protein belongs to the pyridoxine kinase family. PdxY subfamily. Homodimer. The cofactor is Mg(2+).

The catalysed reaction is pyridoxal + ATP = pyridoxal 5'-phosphate + ADP + H(+). The protein operates within cofactor metabolism; pyridoxal 5'-phosphate salvage; pyridoxal 5'-phosphate from pyridoxal: step 1/1. Functionally, pyridoxal kinase involved in the salvage pathway of pyridoxal 5'-phosphate (PLP). Catalyzes the phosphorylation of pyridoxal to PLP. In Pseudomonas fluorescens (strain ATCC BAA-477 / NRRL B-23932 / Pf-5), this protein is Pyridoxal kinase PdxY.